Reading from the N-terminus, the 444-residue chain is Endothelin-3 receptor (444 aa).

The first 18 residues, 1–18, serve as a signal peptide directing secretion; that stretch reads MATVILFVAWMACLMVGV. At 19 to 88 the chain is on the extracellular side; the sequence is CYQEFQTQQN…SRAKIRHAFK (70 aa). N-linked (GlcNAc...) asparagine glycosylation is present at N60. Residues 89–113 form a helical membrane-spanning segment; it reads YVTTILSCVIFLVGIVGNSTLLRII. The Cytoplasmic segment spans residues 114 to 124; it reads YKNKCMRNGPN. A helical membrane pass occupies residues 125–145; that stretch reads VLIASLALGDLFYILIAIPII. The Extracellular segment spans residues 146 to 161; that stretch reads SISFWLSTGHSEYIYQ. The chain crosses the membrane as a helical span at residues 162-180; it reads LVHLYRARVYSLSLCALSI. The Cytoplasmic segment spans residues 181–201; the sequence is DRYRAVASWNRIRSIGIPVRK. Residues 202 to 226 form a helical membrane-spanning segment; it reads AIELTLIWAVAIIVAVPEAIAFNLV. Topologically, residues 227-254 are extracellular; it reads ELDFRGQTILVCMLPMEQTSDFMRFYQE. The chain crosses the membrane as a helical span at residues 255 to 279; the sequence is VKVWWLFGFYFCLPLACTGVFYTLM. Topologically, residues 280-307 are cytoplasmic; it reads SCEMLSIKNGMRIALNDHMKQRREVAKT. Residues 308–328 traverse the membrane as a helical segment; that stretch reads VFCLVVIFALCWLPLHVSSIF. The Extracellular portion of the chain corresponds to 329–365; the sequence is VRLSATVKRACILKNKRSCIMAEIQTGVNYQLLMVMN. Residues 366–386 form a helical membrane-spanning segment; that stretch reads YTGINMASLNSCIGPVALYFV. The Cytoplasmic portion of the chain corresponds to 387 to 444; that stretch reads SRKFKNCFQSCLCCWCHRPTLTITPMDEKGSGGKWKANGHDLDLDRSSSRLSNKYSSS. The tract at residues 416-444 is disordered; it reads GSGGKWKANGHDLDLDRSSSRLSNKYSSS. Over residues 424 to 434 the composition is skewed to basic and acidic residues; the sequence is NGHDLDLDRSS. Over residues 435 to 444 the composition is skewed to low complexity; it reads SRLSNKYSSS.

The protein belongs to the G-protein coupled receptor 1 family. Endothelin receptor subfamily.

The protein resides in the cell membrane. Functionally, receptor for endothelin-3. Mediates its action by association with G proteins that activate a phosphatidylinositol-calcium second messenger system. In Xenopus laevis (African clawed frog), this protein is Endothelin-3 receptor.